The chain runs to 55 residues: ATP synthase protein 8 (55 aa).

A helical membrane pass occupies residues 7-24 (NPWLFIMLMSWLTFSLII). The disordered stretch occupies residues 35-55 (NPPSNKTPTTTKTSPWTWPWT). Low complexity predominate over residues 37-55 (PSNKTPTTTKTSPWTWPWT).

Belongs to the ATPase protein 8 family. F-type ATPases have 2 components, CF(1) - the catalytic core - and CF(0) - the membrane proton channel.

The protein resides in the mitochondrion membrane. Mitochondrial membrane ATP synthase (F(1)F(0) ATP synthase or Complex V) produces ATP from ADP in the presence of a proton gradient across the membrane which is generated by electron transport complexes of the respiratory chain. F-type ATPases consist of two structural domains, F(1) - containing the extramembraneous catalytic core and F(0) - containing the membrane proton channel, linked together by a central stalk and a peripheral stalk. During catalysis, ATP synthesis in the catalytic domain of F(1) is coupled via a rotary mechanism of the central stalk subunits to proton translocation. Part of the complex F(0) domain. Minor subunit located with subunit a in the membrane. This chain is ATP synthase protein 8 (MT-ATP8), found in Corythaeola cristata (Great blue turaco).